Consider the following 88-residue polypeptide: MGTARFLSAVLLLSVLLMVTFPALLSAEYHDGRVDICSLPPDSGDCLRFFEMWYFDGTTCTKFVYGGYGGNDNRFPTEKACMKRCAKA.

An N-terminal signal peptide occupies residues 1–27 (MGTARFLSAVLLLSVLLMVTFPALLSA). The propeptide occupies 28–33 (EYHDGR). One can recognise a BPTI/Kunitz inhibitor domain in the interval 37–85 (CSLPPDSGDCLRFFEMWYFDGTTCTKFVYGGYGGNDNRFPTEKACMKRC). 2 disulfides stabilise this stretch: cysteine 37–cysteine 85 and cysteine 60–cysteine 81.

The protein belongs to the venom Kunitz-type family. 03 (sub-Kunitz) subfamily. As to expression, expressed by the venom gland.

Its subcellular location is the secreted. Functionally, serine protease inhibitor that inhibits trypsin at a molar ratio of 1:1. The protein is Kunitz-type U15-theraphotoxin-Hs1c of Cyriopagopus schmidti (Chinese bird spider).